Consider the following 466-residue polypeptide: Uronate isomerase (466 aa).

Belongs to the metallo-dependent hydrolases superfamily. Uronate isomerase family.

The catalysed reaction is D-glucuronate = D-fructuronate. It carries out the reaction aldehydo-D-galacturonate = keto-D-tagaturonate. The protein operates within carbohydrate metabolism; pentose and glucuronate interconversion. This Streptococcus agalactiae serotype V (strain ATCC BAA-611 / 2603 V/R) protein is Uronate isomerase.